The primary structure comprises 159 residues: Histone H1 (159 aa).

3 disordered regions span residues 1–31 (MAEK…ITEL), 80–99 (KGAE…KKEK), and 132–159 (AAKK…KKKS). The segment covering 10–22 (VTTKKPAATHRRR) has biased composition (basic residues). Residues 12–102 (TKKPAATHRR…GEGKKEKEKA (91 aa)) enclose the H15 domain. The span at 84-93 (CAGGQGTGVG) shows a compositional bias: gly residues. Over residues 134 to 148 (KKVKAAPKKAKKPVK) the composition is skewed to basic residues. Residues 149–159 (KTTEKKEKKKS) are compositionally biased toward basic and acidic residues.

The protein belongs to the histone H1/H5 family.

The protein resides in the nucleus. The protein localises to the chromosome. Its function is as follows. Histones H1 are necessary for the condensation of nucleosome chains into higher-order structures. The polypeptide is Histone H1 (Psammechinus miliaris (Green sea urchin)).